The chain runs to 1270 residues: Breakpoint cluster region protein (1270 aa).

Residues Val-28–Arg-55 adopt a coiled-coil conformation. Disordered regions lie at residues Lys-67–Ala-173, Ile-201–Asp-249, Lys-295–Gln-396, and Thr-412–Thr-484. Residues Gly-126–Pro-139 are compositionally biased toward low complexity. A phosphoserine mark is found at Ser-216 and Ser-237. Tyr-247 carries the phosphotyrosine modification. Composition is skewed to low complexity over residues Ser-348–Ser-358 and Ser-371–Ser-384. Ser-358, Ser-379, and Ser-384 each carry phosphoserine. Position 387 is a phosphothreonine (Thr-387). 2 positions are modified to phosphoserine: Ser-461 and Ser-465. Arg-473 is modified (omega-N-methylarginine). 2 positions are modified to phosphoserine: Ser-475 and Ser-487. The DH domain occupies Met-497–Glu-690. Residue Tyr-553 is modified to Phosphotyrosine. Thr-640 is modified (phosphothreonine). A Phosphotyrosine modification is found at Tyr-643. Thr-692 bears the Phosphothreonine mark. Residues Gln-707–Lys-865 enclose the PH domain. Residues His-892 to Ile-1019 enclose the C2 domain. The Rho-GAP domain maps to Val-1053–Tyr-1247. Ser-1263 is subject to Phosphoserine.

Homotetramer. Interacts with PDZK1. May interact with CCPG1. Interacts with HCK, FES/FPS, ABL1, PIK3R1 and GRB2. Interacts with SH2D5. Interacts with DLG4. Autophosphorylated. Phosphorylated by FES/FPS on tyrosine residues, leading to down-regulation of the BCR kinase activity. Phosphorylation by HCK is important for interaction with GRB2. In terms of tissue distribution, expressed in brain, including the cortex, hippocampus, cerebellum, and brainstem, as well as the spinal cord (at protein level).

Its subcellular location is the postsynaptic density. It localises to the cell projection. The protein localises to the dendritic spine. The protein resides in the axon. It is found in the synapse. The catalysed reaction is L-seryl-[protein] + ATP = O-phospho-L-seryl-[protein] + ADP + H(+). It catalyses the reaction L-threonyl-[protein] + ATP = O-phospho-L-threonyl-[protein] + ADP + H(+). Protein with a unique structure having two opposing regulatory activities toward small GTP-binding proteins. The C-terminus is a GTPase-activating protein (GAP) domain which stimulates GTP hydrolysis by RAC1, RAC2 and CDC42. Accelerates the intrinsic rate of GTP hydrolysis of RAC1 or CDC42, leading to down-regulation of the active GTP-bound form. The central Dbl homology (DH) domain functions as guanine nucleotide exchange factor (GEF) that modulates the GTPases CDC42, RHOA and RAC1. Promotes the conversion of CDC42, RHOA and RAC1 from the GDP-bound to the GTP-bound form. The amino terminus contains an intrinsic kinase activity. Functions as an important negative regulator of neuronal RAC1 activity. Regulates macrophage functions such as CSF1-directed motility and phagocytosis through the modulation of RAC1 activity. Plays a major role as a RHOA GEF in keratinocytes being involved in focal adhesion formation and keratinocyte differentiation. The sequence is that of Breakpoint cluster region protein from Rattus norvegicus (Rat).